The primary structure comprises 208 residues: Thymidylate kinase (208 aa).

11–18 (GGEGAGKS) contributes to the ATP binding site.

Belongs to the thymidylate kinase family.

It carries out the reaction dTMP + ATP = dTDP + ADP. In terms of biological role, phosphorylation of dTMP to form dTDP in both de novo and salvage pathways of dTTP synthesis. In Caulobacter vibrioides (strain ATCC 19089 / CIP 103742 / CB 15) (Caulobacter crescentus), this protein is Thymidylate kinase (tmk).